Consider the following 396-residue polypeptide: MLAVTSCSMKTVLQYAVFLGHSREVVCELVTSFRSFCSHCAVPPSPKYGGRHTVAMIPGDGIGPELMVHVKKIFRSNCVPVDFEEVWVTSTSNEEEINNALMAIRRNRVALKGNIATNHNLPARYKSHNTKFRTILDLYASVVHFKTFPGVMTRHKDIDILVVRENTEGEYTNLEHESVKGVVESLKIVTKTKSVRIADYAFKLAQKMGRKKVTVVHKANIMKLGDGLFLQCCKDVAAHYPQITLESMIIDNTTMQLVSKPQQFDVMVMPNLYGNIINSICTGLVGGSGIVPGANYGDSYAIFEMGSKEIGKDLAHRNIANPVAMLLTSCIMLDYLDLQPYATHIRSAVMASLQNKAVCTPDIGGQGNTASTVEYILHHMKEQTSGCHPNFFLQFT.

A mitochondrion-targeting transit peptide spans 1 to 25 (MLAVTSCSMKTVLQYAVFLGHSREV). Threonine 117 is a citrate binding site. Residues arginine 133, arginine 164, and aspartate 251 each coordinate substrate. Aspartate 251 contributes to the Mn(2+) binding site. An ADP-binding site is contributed by asparagine 321.

The protein belongs to the isocitrate and isopropylmalate dehydrogenases family. As to quaternary structure, heterooligomer of subunits alpha (IDH3A), beta (IDH3B), and gamma (IDH3G) in the apparent ratio of 2:1:1. The heterodimer containing one IDH3A and one IDH3B subunit and the heterodimer containing one IDH3A and one IDH3G subunit assemble into a heterotetramer (which contains two subunits of IDH3A, one of IDH3B and one of IDH3G) and further into the heterooctamer. The cofactor is Mg(2+). Mn(2+) serves as cofactor.

The protein resides in the mitochondrion. Its activity is regulated as follows. The heterotetramer and the heterodimer composed of IDH3A and IDH3G subunits can be allosterically activated by citrate (CIT) or/and ADP, and the two activators can act independently or synergistically. The heterodimer composed of IDH3A and IDH3B subunits cannot be allosterically regulated and the allosteric regulation of the heterotetramer is through the IDH3G subunit and not the IDH3B subunit. The IDH3G subunit contains the allosteric site which consists of a CIT-binding site and an ADP-binding site, and the binding of CIT and ADP causes conformational changes at the allosteric site which are transmitted to the active site in the catalytic subunit (IDH3A) through a cascade of conformational changes at the heterodimer interface, leading to stabilization of the isocitrate-binding at the active site and thus activation of the enzyme. ATP can activate the heterotetramer and the heterodimer composed of IDH3A and IDH3G subunits at low concentrations but inhibits their activities at high concentrations, whereas ATP exhibits only inhibitory effect on the heterodimer composed of IDH3A and IDH3B subunits. Regulatory subunit which plays a role in the allosteric regulation of the enzyme catalyzing the decarboxylation of isocitrate (ICT) into alpha-ketoglutarate. The heterodimer composed of the alpha (IDH3A) and beta (IDH3B) subunits and the heterodimer composed of the alpha (IDH3A) and gamma (IDH3G) subunits, have considerable basal activity but the full activity of the heterotetramer (containing two subunits of IDH3A, one of IDH3B and one of IDH3G) requires the assembly and cooperative function of both heterodimers. The protein is Probable isocitrate dehydrogenase [NAD] gamma 2, mitochondrial of Mus musculus (Mouse).